The chain runs to 166 residues: Interferon gamma (166 aa).

The first 23 residues, 1–23, serve as a signal peptide directing secretion; the sequence is MSYTTYFLAFQLCVTLCFSGSYC. Gln24 is subject to Pyrrolidone carboxylic acid. N-linked (GlcNAc...) asparagine glycosylation is found at Asn39 and Asn106.

It belongs to the type II (or gamma) interferon family. In terms of assembly, homodimer. Interacts with IFNGR1 (via extracellular domain); this interaction promotes IFNGR1 dimerization. In terms of tissue distribution, released primarily from activated T lymphocytes.

The protein resides in the secreted. Type II interferon produced by immune cells such as T-cells and NK cells that plays crucial roles in antimicrobial, antiviral, and antitumor responses by activating effector immune cells and enhancing antigen presentation. Primarily signals through the JAK-STAT pathway after interaction with its receptor IFNGR1 to affect gene regulation. Upon IFNG binding, IFNGR1 intracellular domain opens out to allow association of downstream signaling components JAK2, JAK1 and STAT1, leading to STAT1 activation, nuclear translocation and transcription of IFNG-regulated genes. Many of the induced genes are transcription factors such as IRF1 that are able to further drive regulation of a next wave of transcription. Plays a role in class I antigen presentation pathway by inducing a replacement of catalytic proteasome subunits with immunoproteasome subunits. In turn, increases the quantity, quality, and repertoire of peptides for class I MHC loading. Increases the efficiency of peptide generation also by inducing the expression of activator PA28 that associates with the proteasome and alters its proteolytic cleavage preference. Up-regulates as well MHC II complexes on the cell surface by promoting expression of several key molecules such as cathepsins B/CTSB, H/CTSH, and L/CTSL. Participates in the regulation of hematopoietic stem cells during development and under homeostatic conditions by affecting their development, quiescence, and differentiation. This Sus scrofa (Pig) protein is Interferon gamma (IFNG).